A 308-amino-acid chain; its full sequence is Elongation factor Ts (308 aa).

The tract at residues 80–83 is involved in Mg(2+) ion dislocation from EF-Tu; the sequence is TDFV.

Belongs to the EF-Ts family.

It is found in the cytoplasm. In terms of biological role, associates with the EF-Tu.GDP complex and induces the exchange of GDP to GTP. It remains bound to the aminoacyl-tRNA.EF-Tu.GTP complex up to the GTP hydrolysis stage on the ribosome. The polypeptide is Elongation factor Ts (Rhodopseudomonas palustris (strain BisB5)).